A 269-amino-acid polypeptide reads, in one-letter code: Ubiquinone/menaquinone biosynthesis C-methyltransferase UbiE (269 aa).

S-adenosyl-L-methionine contacts are provided by residues Thr-92, Asp-113, and 141-142 (NA).

The protein belongs to the class I-like SAM-binding methyltransferase superfamily. MenG/UbiE family.

It carries out the reaction a 2-demethylmenaquinol + S-adenosyl-L-methionine = a menaquinol + S-adenosyl-L-homocysteine + H(+). It catalyses the reaction a 2-methoxy-6-(all-trans-polyprenyl)benzene-1,4-diol + S-adenosyl-L-methionine = a 5-methoxy-2-methyl-3-(all-trans-polyprenyl)benzene-1,4-diol + S-adenosyl-L-homocysteine + H(+). The protein operates within quinol/quinone metabolism; menaquinone biosynthesis; menaquinol from 1,4-dihydroxy-2-naphthoate: step 2/2. It participates in cofactor biosynthesis; ubiquinone biosynthesis. Functionally, methyltransferase required for the conversion of demethylmenaquinol (DMKH2) to menaquinol (MKH2) and the conversion of 2-polyprenyl-6-methoxy-1,4-benzoquinol (DDMQH2) to 2-polyprenyl-3-methyl-6-methoxy-1,4-benzoquinol (DMQH2). The polypeptide is Ubiquinone/menaquinone biosynthesis C-methyltransferase UbiE (Brucella suis (strain ATCC 23445 / NCTC 10510)).